Here is a 138-residue protein sequence, read N- to C-terminus: Gonadotropin subunit beta-2 (138 aa).

The N-terminal stretch at 1-21 (MPASSYFLLFFFMNFFSPAQS) is a signal peptide. Disulfide bonds link Cys-27-Cys-75, Cys-41-Cys-90, Cys-44-Cys-128, Cys-52-Cys-106, Cys-56-Cys-108, and Cys-111-Cys-118. An N-linked (GlcNAc...) asparagine glycan is attached at Asn-31.

The protein belongs to the glycoprotein hormones subunit beta family. As to quaternary structure, heterodimer of an alpha and a beta chain.

The protein localises to the secreted. Its function is as follows. Involved in gametogenesis and steroidogenesis. The sequence is that of Gonadotropin subunit beta-2 (cgbb) from Clarias gariepinus (North African catfish).